Reading from the N-terminus, the 105-residue chain is Molt-inhibiting hormone (105 aa).

An N-terminal signal peptide occupies residues 1–28 (MYRLAMRTWLAIVIVVVGTSLLFDTASA). Disulfide bonds link cysteine 35–cysteine 72, cysteine 52–cysteine 68, and cysteine 55–cysteine 81.

The protein belongs to the arthropod CHH/MIH/GIH/VIH hormone family. As to expression, produced by the medulla terminalis X-organ in the eyestalks and transported to the sinus gland where it is stored and released.

Its subcellular location is the secreted. In terms of biological role, inhibits Y-organs where molting hormone (ecdysteroid) is secreted. A molting cycle is initiated when MIH secretion diminishes or stops. Has little or no hyperglycemic activity. The chain is Molt-inhibiting hormone from Penaeus japonicus (Kuruma prawn).